A 458-amino-acid polypeptide reads, in one-letter code: ATP synthase subunit beta (458 aa).

148–155 (GGAGVGKT) lines the ATP pocket.

The protein belongs to the ATPase alpha/beta chains family. In terms of assembly, F-type ATPases have 2 components, CF(1) - the catalytic core - and CF(0) - the membrane proton channel. CF(1) has five subunits: alpha(3), beta(3), gamma(1), delta(1), epsilon(1). CF(0) has three main subunits: a(1), b(2) and c(9-12). The alpha and beta chains form an alternating ring which encloses part of the gamma chain. CF(1) is attached to CF(0) by a central stalk formed by the gamma and epsilon chains, while a peripheral stalk is formed by the delta and b chains.

The protein localises to the cell inner membrane. The enzyme catalyses ATP + H2O + 4 H(+)(in) = ADP + phosphate + 5 H(+)(out). Its function is as follows. Produces ATP from ADP in the presence of a proton gradient across the membrane. The catalytic sites are hosted primarily by the beta subunits. The polypeptide is ATP synthase subunit beta (Francisella tularensis subsp. holarctica (strain FTNF002-00 / FTA)).